The chain runs to 306 residues: Proteasome subunit beta (306 aa).

A propeptide spans 1 to 67 (MTWPNRDQPA…GLPTDAVPHG (67 aa)) (removed in mature form; by autocatalysis). The active-site Nucleophile is Thr68.

This sequence belongs to the peptidase T1B family. The 20S proteasome core is composed of 14 alpha and 14 beta subunits that assemble into four stacked heptameric rings, resulting in a barrel-shaped structure. The two inner rings, each composed of seven catalytic beta subunits, are sandwiched by two outer rings, each composed of seven alpha subunits. The catalytic chamber with the active sites is on the inside of the barrel. Has a gated structure, the ends of the cylinder being occluded by the N-termini of the alpha-subunits. Is capped by the proteasome-associated ATPase, ARC.

The protein localises to the cytoplasm. It carries out the reaction Cleavage of peptide bonds with very broad specificity.. It participates in protein degradation; proteasomal Pup-dependent pathway. With respect to regulation, the formation of the proteasomal ATPase ARC-20S proteasome complex, likely via the docking of the C-termini of ARC into the intersubunit pockets in the alpha-rings, may trigger opening of the gate for substrate entry. Interconversion between the open-gate and close-gate conformations leads to a dynamic regulation of the 20S proteasome proteolysis activity. Component of the proteasome core, a large protease complex with broad specificity involved in protein degradation. The polypeptide is Proteasome subunit beta (Mycolicibacterium vanbaalenii (strain DSM 7251 / JCM 13017 / BCRC 16820 / KCTC 9966 / NRRL B-24157 / PYR-1) (Mycobacterium vanbaalenii)).